The following is a 197-amino-acid chain: Dephospho-CoA kinase (197 aa).

Residues 2–197 enclose the DPCK domain; sequence RIGLTGGIAS…YDALAKTAHE (196 aa). 10–15 is an ATP binding site; that stretch reads ASGKSL.

It belongs to the CoaE family.

Its subcellular location is the cytoplasm. The enzyme catalyses 3'-dephospho-CoA + ATP = ADP + CoA + H(+). Its pathway is cofactor biosynthesis; coenzyme A biosynthesis; CoA from (R)-pantothenate: step 5/5. Functionally, catalyzes the phosphorylation of the 3'-hydroxyl group of dephosphocoenzyme A to form coenzyme A. This Shouchella clausii (strain KSM-K16) (Alkalihalobacillus clausii) protein is Dephospho-CoA kinase.